A 159-amino-acid polypeptide reads, in one-letter code: Transcriptional repressor NrdR (159 aa).

Residues 3-34 (CPFCGGVENKVMDSRVSRDGNAIRRRRECLAC) fold into a zinc finger. The ATP-cone domain maps to 49 to 139 (PTVVKKDGRR…VYRQFRDVND (91 aa)).

The protein belongs to the NrdR family. The cofactor is Zn(2+).

Its function is as follows. Negatively regulates transcription of bacterial ribonucleotide reductase nrd genes and operons by binding to NrdR-boxes. This Syntrophus aciditrophicus (strain SB) protein is Transcriptional repressor NrdR.